Here is an 88-residue protein sequence, read N- to C-terminus: ATP synthase F(0) complex subunit f, mitochondrial (88 aa).

The residue at position 2 (A2) is an N-acetylalanine. S3 bears the Phosphoserine mark. The residue at position 16 (K16) is an N6-acetyllysine. The helical transmembrane segment at 62-79 threads the bilayer; the sequence is MVLAAYVVFSYCISYKEL.

Belongs to the ATPase F chain family. As to quaternary structure, component of the ATP synthase complex composed at least of ATP5F1A/subunit alpha, ATP5F1B/subunit beta, ATP5MC1/subunit c (homooctomer), MT-ATP6/subunit a, MT-ATP8/subunit 8, ATP5ME/subunit e, ATP5MF/subunit f, ATP5MG/subunit g, ATP5MK/subunit k, ATP5MJ/subunit j, ATP5F1C/subunit gamma, ATP5F1D/subunit delta, ATP5F1E/subunit epsilon, ATP5PF/subunit F6, ATP5PB/subunit b, ATP5PD/subunit d, ATP5PO/subunit OSCP. ATP synthase complex consists of a soluble F(1) head domain (subunits alpha(3) and beta(3)) - the catalytic core - and a membrane F(0) domain - the membrane proton channel (subunits c, a, 8, e, f, g, k and j). These two domains are linked by a central stalk (subunits gamma, delta, and epsilon) rotating inside the F1 region and a stationary peripheral stalk (subunits F6, b, d, and OSCP).

Its subcellular location is the mitochondrion. The protein resides in the mitochondrion inner membrane. Its function is as follows. Subunit f, of the mitochondrial membrane ATP synthase complex (F(1)F(0) ATP synthase or Complex V) that produces ATP from ADP in the presence of a proton gradient across the membrane which is generated by electron transport complexes of the respiratory chain. ATP synthase complex consist of a soluble F(1) head domain - the catalytic core - and a membrane F(1) domain - the membrane proton channel. These two domains are linked by a central stalk rotating inside the F(1) region and a stationary peripheral stalk. During catalysis, ATP synthesis in the catalytic domain of F(1) is coupled via a rotary mechanism of the central stalk subunits to proton translocation. In vivo, can only synthesize ATP although its ATP hydrolase activity can be activated artificially in vitro. Part of the complex F(0) domain. This chain is ATP synthase F(0) complex subunit f, mitochondrial, found in Mus musculus (Mouse).